The following is a 536-amino-acid chain: Phosphoenolpyruvate carboxykinase (ATP) (536 aa).

Arg61, Tyr195, and Lys201 together coordinate substrate. Residues Lys201, His220, and Gly236–Thr244 each bind ATP. Lys201 and His220 together coordinate Mn(2+). A Mn(2+)-binding site is contributed by Asp257. Glu285, Arg322, and Thr447 together coordinate ATP. Arg322 is a substrate binding site.

This sequence belongs to the phosphoenolpyruvate carboxykinase (ATP) family. Mn(2+) is required as a cofactor.

The protein localises to the cytoplasm. The enzyme catalyses oxaloacetate + ATP = phosphoenolpyruvate + ADP + CO2. It participates in carbohydrate biosynthesis; gluconeogenesis. Its function is as follows. Involved in the gluconeogenesis. Catalyzes the conversion of oxaloacetate (OAA) to phosphoenolpyruvate (PEP) through direct phosphoryl transfer between the nucleoside triphosphate and OAA. The chain is Phosphoenolpyruvate carboxykinase (ATP) from Brucella melitensis biotype 1 (strain ATCC 23456 / CCUG 17765 / NCTC 10094 / 16M).